The sequence spans 114 residues: Transcription initiation factor IIB (114 aa).

2 consecutive repeat copies span residues 1-17 and 28-109.

The protein belongs to the TFIIB family.

Stabilizes TBP binding to an archaeal box-A promoter. Also responsible for recruiting RNA polymerase II to the pre-initiation complex (DNA-TBP-TFIIB). The protein is Transcription initiation factor IIB (tfb) of Haloarcula vallismortis (Halobacterium vallismortis).